A 291-amino-acid polypeptide reads, in one-letter code: HTH-type transcriptional regulator CitR (291 aa).

Residues 1-58 form the HTH lysR-type domain; sequence MDFKWLHTFVTAAKYENFRKTAETLFLSQPTVTVHIKQLEKEISCKLFERKGRQIQLT. Positions 18–37 form a DNA-binding region, H-T-H motif; that stretch reads FRKTAETLFLSQPTVTVHIK.

The protein belongs to the LysR transcriptional regulatory family.

The protein localises to the cytoplasm. Functionally, negative regulatory protein for the citA gene for citrate synthase I. This is HTH-type transcriptional regulator CitR (citR) from Bacillus subtilis (strain 168).